Here is a 198-residue protein sequence, read N- to C-terminus: BPTI/Kunitz domain-containing protein 4 (198 aa).

An N-terminal signal peptide occupies residues 1–19 (MNLLVFFVYLXVCVIGSHS). Antistasin-like domains are found at residues 31-56 (CGGA…ICKC), 56-85 (CRDA…TCEC), 85-114 (CKPL…TCFC), and 114-143 (CRPR…TCKC). The BPTI/Kunitz inhibitor domain occupies 146–196 (CLEPKKVGPCRALIPRYFYDVWSGKCKKFYWGGCQANGNNFKRKSQCCKRC). Disulfide bonds link Cys-146–Cys-196, Cys-155–Cys-179, and Cys-171–Cys-192.

In terms of tissue distribution, nacreous layer of shell (at protein level).

Its subcellular location is the secreted. The protein is BPTI/Kunitz domain-containing protein 4 of Margaritifera margaritifera (Freshwater pearl mussel).